A 257-amino-acid polypeptide reads, in one-letter code: NAD-capped RNA hydrolase NudC (257 aa).

Substrate is bound at residue Arg69. Residues Cys98 and Cys101 each coordinate Zn(2+). Glu111 contributes to the substrate binding site. Zn(2+) is bound by residues Cys116 and Cys119. Residue Tyr124 participates in substrate binding. The Nudix hydrolase domain occupies 125–248 (PQIAPCIIVA…TVARRLIEDT (124 aa)). Residues Ala158, Glu174, and Glu178 each coordinate a divalent metal cation. Residues 159–180 (GFVEVGETLEQAVAREVMEESG) carry the Nudix box motif. Residue 192-199 (QPWPFPQS) coordinates substrate. Position 219 (Glu219) interacts with a divalent metal cation. Ala241 provides a ligand contact to substrate.

Belongs to the Nudix hydrolase family. NudC subfamily. In terms of assembly, homodimer. The cofactor is Mg(2+). Mn(2+) is required as a cofactor. Requires Zn(2+) as cofactor.

The catalysed reaction is a 5'-end NAD(+)-phospho-ribonucleoside in mRNA + H2O = a 5'-end phospho-adenosine-phospho-ribonucleoside in mRNA + beta-nicotinamide D-ribonucleotide + 2 H(+). It catalyses the reaction NAD(+) + H2O = beta-nicotinamide D-ribonucleotide + AMP + 2 H(+). It carries out the reaction NADH + H2O = reduced beta-nicotinamide D-ribonucleotide + AMP + 2 H(+). Functionally, mRNA decapping enzyme that specifically removes the nicotinamide adenine dinucleotide (NAD) cap from a subset of mRNAs by hydrolyzing the diphosphate linkage to produce nicotinamide mononucleotide (NMN) and 5' monophosphate mRNA. The NAD-cap is present at the 5'-end of some mRNAs and stabilizes RNA against 5'-processing. Has preference for mRNAs with a 5'-end purine. Catalyzes the hydrolysis of a broad range of dinucleotide pyrophosphates. The polypeptide is NAD-capped RNA hydrolase NudC (Salmonella dublin (strain CT_02021853)).